A 375-amino-acid polypeptide reads, in one-letter code: ATP-sensitive inward rectifier potassium channel 15 (375 aa).

Over 1 to 60 (MDAIHLGMSSAPLVKHTNGVGLKAHRPRVMSKSGHSNVRIDKVDGIYLLYLQDLWTTVID) the chain is Cytoplasmic. The helical transmembrane segment at 61–87 (MKWRYKLTLFAATFVMTWFLFGVVYYA) threads the bilayer. Residues 88–113 (IAFIHGDLQLGESNSNHTPCIMKVDS) are Extracellular-facing. Positions 114–130 (LTGAFLFSLESQTTIGY) form an intramembrane region, helical; Pore-forming. The Selectivity filter motif lies at 127–132 (TIGYGV). At 131-139 (GVRSITEEC) the chain is on the extracellular side. Residues 140–165 (PHAIFLLVAQLVITTLIEIFITGTFL) traverse the membrane as a helical segment. Topologically, residues 166–375 (AKIARPKKRA…RSLLLQQSNV (210 aa)) are cytoplasmic.

It belongs to the inward rectifier-type potassium channel (TC 1.A.2.1) family. KCNJ15 subfamily. As to quaternary structure, can form heteromultimeric channels with Kir5.1/KCNJ16. Interacts with PATJ. As to expression, expressed in the proximal segment of the nephron.

It is found in the membrane. It localises to the cell membrane. The catalysed reaction is K(+)(in) = K(+)(out). With respect to regulation, channel activity is regulated by variations of cytosolic pH; reversibly inhibited by acidic pH values. Inhibited by Ba(2+) and Cs(+) in a voltage-dependent manner. In terms of biological role, inward rectifier potassium channels are characterized by a greater tendency to allow potassium to flow into the cell rather than out of it. Their voltage dependence is regulated by the concentration of extracellular potassium; as external potassium is raised, the voltage range of the channel opening shifts to more positive voltages. The inward rectification is mainly due to the blockage of outward current by internal magnesium. This is ATP-sensitive inward rectifier potassium channel 15 (Kcnj15) from Mus musculus (Mouse).